Reading from the N-terminus, the 294-residue chain is Metallophosphoesterase MPPED2 (294 aa).

Residues aspartate 65, histidine 67, aspartate 86, asparagine 117, and histidine 213 each coordinate Mn(2+). 117–118 (NH) contacts GMP. GMP contacts are provided by residues 225–226 (KE) and 252–255 (GIHE). Histidine 254 is a binding site for Mn(2+).

This sequence belongs to the UPF0046 family. In terms of assembly, homodimer. Mn(2+) serves as cofactor. The cofactor is Co(2+). As to expression, expressed predominantly in fetal brain.

With respect to regulation, inhibited by nmolar levels of AMP and GMP. Displays low metallophosphoesterase activity (in vitro). May play a role in the development of the nervous system. The chain is Metallophosphoesterase MPPED2 (MPPED2) from Homo sapiens (Human).